The following is a 1491-amino-acid chain: CLIP-associating protein (1491 aa).

4 HEAT repeats span residues 44–82, 85–123, 163–201, and 402–440; these read CTDM…RLGS, NAYT…HRVL, QLSV…HVGD, and DAFC…YTHA. 2 disordered regions span residues 537-586 and 600-739; these read RERE…AVDT and LYSR…NNPV. The span at 542-551 shows a compositional bias: gly residues; it reads GGGGGTGTGT. The segment covering 569-580 has biased composition (polar residues); sequence GTLQKPTPSMRS. Residues S582, S626, and S634 each carry the phosphoserine modification. Residues 632-646 show a composition bias toward polar residues; that stretch reads LNSNSGGTPATTPGS. T648 carries the post-translational modification Phosphothreonine. Polar residues-rich tracts occupy residues 657–671 and 699–712; these read VSQS…SPST and PRST…SPTR. Phosphoserine is present on residues S806, S817, S820, S822, and S824. HEAT repeat units follow at residues 874-912 and 955-993; these read QQQL…VHAN and QLQL…TYCK. Disordered stretches follow at residues 1065–1127 and 1167–1205; these read HMRR…SVEQ and GHLQ…ESAT. 3 stretches are compositionally biased toward low complexity: residues 1070–1097, 1111–1124, and 1181–1200; these read SQSC…QSPS, LSIS…RQSS, and ASLS…QSNT. S1120, S1123, and S1124 each carry phosphoserine. 2 HEAT repeats span residues 1289–1327 and 1408–1446; these read NKHF…SNKM and DAHL…VLGE.

The protein belongs to the CLASP family. As to quaternary structure, interacts with CLIP-190 and microtubules. As to expression, expressed in testis and ovary.

The protein resides in the cytoplasm. The protein localises to the cytoskeleton. It is found in the nucleus. It localises to the microtubule organizing center. Its subcellular location is the centrosome. The protein resides in the spindle. The protein localises to the cell projection. It is found in the growth cone. It localises to the cleavage furrow. Microtubule plus-end tracking protein that promotes the stabilization of dynamic microtubules. Required for several aspects of mitotic spindle formation including the formation of the overlapping central spindle microtubules and kinetochore attachment. Required for the incorporation of tubulin subunits at the plus ends of kinetochore microtubules during poleward microtubule flux. Acts antagonistically to Klp10A and Klp67A to maintain metaphase spindle length. Also required for guidance of CNS axons downstream of Abl. May function to identify a subset of microtubules that probe the peripheral growth cone domain, where guidance signals exert their influence on cytoskeletal organization. Also required during oogenesis for the organization of the polarized microtubule network inside the 16-cell cyst that ensures oocyte differentiation. This is CLIP-associating protein (chb) from Drosophila melanogaster (Fruit fly).